A 243-amino-acid chain; its full sequence is MEQSSNRPEDFPLNVFSVTPYTPSTADIQVSDDDKAGATLLFSGIFLGLVGITFTVMGWIKYQGVSHFEWTQLLGPILLSVGVTFILISVCKFKMLSCQLCTDNEERVLDSDQTSGGQSFVFTGINQPITFHGATVVQYIPPPYGSQEPLGMNTTYLQPMMNPCGLVPSSGAVAATPSPPQYYTIYPQDNAAFVESEGFSPFVGAGHDRPSSDADQLEGTQMGEEERVCFSPPPYEEIYALPR.

2 helical membrane-spanning segments follow: residues 40–60 (LLFSGIFLGLVGITFTVMGWI) and 73–93 (LLGPILLSVGVTFILISVCKF). The disordered stretch occupies residues 205 to 229 (AGHDRPSSDADQLEGTQMGEEERVC).

As to quaternary structure, interacts with SLC34A1; regulates SLC34A1 internalization by PTH and FGF23.

It is found in the endoplasmic reticulum membrane. The protein localises to the apical cell membrane. Functionally, regulator of plasma phosphate homeostasis. Decreases serum inorganic phosphate (Pi) uptake by regulating the sodium-phosphate cotransporter SLC34A1 trafficking by PTH and FGF23 in the kidney. The polypeptide is Transmembrane protein 174 (Tmem174) (Rattus norvegicus (Rat)).